Consider the following 397-residue polypeptide: Argininosuccinate synthase (397 aa).

An ATP-binding site is contributed by 8 to 16 (AYSGGLDTS). L-citrulline is bound by residues Tyr86 and Ser91. Residue Gly116 participates in ATP binding. Positions 118, 122, and 123 each coordinate L-aspartate. Asn122 is a binding site for L-citrulline. L-citrulline-binding residues include Arg126, Ser175, Ser184, Glu260, and Tyr272.

Belongs to the argininosuccinate synthase family. Type 1 subfamily. In terms of assembly, homotetramer.

It is found in the cytoplasm. The catalysed reaction is L-citrulline + L-aspartate + ATP = 2-(N(omega)-L-arginino)succinate + AMP + diphosphate + H(+). Its pathway is amino-acid biosynthesis; L-arginine biosynthesis; L-arginine from L-ornithine and carbamoyl phosphate: step 2/3. In Clostridium botulinum (strain ATCC 19397 / Type A), this protein is Argininosuccinate synthase.